We begin with the raw amino-acid sequence, 123 residues long: Alpha-lactalbumin (123 aa).

Residues 1 to 123 (KQFTKCELSQ…KLEQWLCEEL (123 aa)) form the C-type lysozyme domain. 4 disulfides stabilise this stretch: Cys6-Cys120, Cys28-Cys111, Cys61-Cys77, and Cys73-Cys91. Positions 79, 82, 84, 87, and 88 each coordinate Ca(2+).

It belongs to the glycosyl hydrolase 22 family. Lactose synthase (LS) is a heterodimer of a catalytic component, beta1,4-galactosyltransferase (beta4Gal-T1) and a regulatory component, alpha-lactalbumin (LA). In terms of tissue distribution, mammary gland specific. Secreted in milk.

It is found in the secreted. Functionally, regulatory subunit of lactose synthase, changes the substrate specificity of galactosyltransferase in the mammary gland making glucose a good acceptor substrate for this enzyme. This enables LS to synthesize lactose, the major carbohydrate component of milk. In other tissues, galactosyltransferase transfers galactose onto the N-acetylglucosamine of the oligosaccharide chains in glycoproteins. The chain is Alpha-lactalbumin (LALBA) from Equus asinus (Donkey).